The primary structure comprises 687 residues: Polyphosphate kinase (687 aa).

Asn-45 is a binding site for ATP. Mg(2+)-binding residues include Arg-375 and Arg-405. His-435 functions as the Phosphohistidine intermediate in the catalytic mechanism. ATP is bound by residues Tyr-472, Arg-568, and His-596.

This sequence belongs to the polyphosphate kinase 1 (PPK1) family. Mg(2+) is required as a cofactor. In terms of processing, an intermediate of this reaction is the autophosphorylated ppk in which a phosphate is covalently linked to a histidine residue through a N-P bond.

The enzyme catalyses [phosphate](n) + ATP = [phosphate](n+1) + ADP. Its function is as follows. Catalyzes the reversible transfer of the terminal phosphate of ATP to form a long-chain polyphosphate (polyP). The protein is Polyphosphate kinase of Burkholderia ambifaria (strain ATCC BAA-244 / DSM 16087 / CCUG 44356 / LMG 19182 / AMMD) (Burkholderia cepacia (strain AMMD)).